The sequence spans 541 residues: Transmembrane protein 151 homolog (541 aa).

Transmembrane regions (helical) follow at residues 27–47 (GYGK…YATF), 73–93 (YNFV…MECW), and 254–274 (PWFL…SWPL). Residues 503-541 (ASISHSSSKDLKSLTLKSSSSNNNNNNSNNNNNDDPEHP) form a disordered region. A compositionally biased stretch (low complexity) spans 515-535 (SLTLKSSSSNNNNNNSNNNNN).

Belongs to the TMEM151 family.

The protein resides in the membrane. The chain is Transmembrane protein 151 homolog from Caenorhabditis elegans.